Reading from the N-terminus, the 422-residue chain is MASFENSLSVLIVGAGLGGLAAAIALRRQGHVVKIYDSSSFKAELGAGLAVPPNTLRSLQQLGCNTENLNGVDNLCFTAMGYDGSVGMMNNMTDYREAYGTSWIMVHRVDLHNELMRVALDPGGLGPPATLHLNHRVTFCDVDACTVTFTNGTTQSADLIVGADGIRSTIRRFVLEEDVTVPASGIVGFRWLVQADALDPYPELDWIVKKPPLGARLISTPQNPQSGVGLADRRTIIIYACRGGTMVNVLAVHDDERDQNTADWSVPASKDDLFRVFHDYHPRFRRLLELAQDINLWQMRVVPVLKKWVNKRVCLLGDAAHASLPTLGQGFGMGLEDAVALGTLLPKGTTASQIETRLAVYEQLRKDRAEFVAAESYEEQYVPEMRGLYLRSKELRDRVMGYDIKVESEKVLETLLRSSNSA.

Residues 6–26 form a helical membrane-spanning segment; it reads NSLSVLIVGAGLGGLAAAIAL. Positions 50, 108, and 318 each coordinate FAD.

This sequence belongs to the paxM FAD-dependent monooxygenase family. Monomer. FAD serves as cofactor.

The protein resides in the membrane. It carries out the reaction hispidin + NADH + O2 + H(+) = 3-hydroxyhispidin + NAD(+) + H2O. The catalysed reaction is hispidin + NADPH + O2 + H(+) = 3-hydroxyhispidin + NADP(+) + H2O. Its pathway is secondary metabolite biosynthesis. Hispidin-3-hydroxylase; part of the gene cluster that mediates the fungal bioluminescence cycle. Hydroxylates hispidin in order to produce the fungal luciferin 3-hydroxyhispidin. The fungal bioluminescence cycle begins with the hispidin synthetase that catalyzes the formation of hispidin which is further hydroxylated by the hispidin-3-hydroxylase, yielding the fungal luciferin 3-hydroxyhispidin. The luciferase then produces an endoperoxide as a high-energy intermediate with decomposition that yields oxyluciferin (also known as caffeoylpyruvate) and light emission. Oxyluciferin can be recycled to caffeic acid by caffeoylpyruvate hydrolase. This Neonothopanus nambi (Agaricus nambi) protein is Hispidin-3-hydroxylase.